Reading from the N-terminus, the 299-residue chain is ATP phosphoribosyltransferase (299 aa).

Belongs to the ATP phosphoribosyltransferase family. Long subfamily. It depends on Mg(2+) as a cofactor.

It is found in the cytoplasm. It carries out the reaction 1-(5-phospho-beta-D-ribosyl)-ATP + diphosphate = 5-phospho-alpha-D-ribose 1-diphosphate + ATP. It participates in amino-acid biosynthesis; L-histidine biosynthesis; L-histidine from 5-phospho-alpha-D-ribose 1-diphosphate: step 1/9. With respect to regulation, feedback inhibited by histidine. Its function is as follows. Catalyzes the condensation of ATP and 5-phosphoribose 1-diphosphate to form N'-(5'-phosphoribosyl)-ATP (PR-ATP). Has a crucial role in the pathway because the rate of histidine biosynthesis seems to be controlled primarily by regulation of HisG enzymatic activity. The sequence is that of ATP phosphoribosyltransferase from Campylobacter jejuni subsp. jejuni serotype O:2 (strain ATCC 700819 / NCTC 11168).